The primary structure comprises 216 residues: Adenylate kinase (216 aa).

10-15 (GAGKGT) lines the ATP pocket. An NMP region spans residues 30-59 (STGDMLRAAVAAGTEVGKRAKAVMDAGKLV). AMP is bound by residues Thr-31, Arg-36, 57 to 59 (KLV), 85 to 88 (GFPR), and Gln-92. Positions 126–163 (GRYTCANCGAGYHDENLRPKVEGVCDRCGSTHFKRRAD) are LID. Arg-127 contributes to the ATP binding site. Residues Cys-130, Cys-133, Cys-150, and Cys-153 each coordinate Zn(2+). AMP contacts are provided by Arg-160 and Arg-172. Ala-200 lines the ATP pocket.

This sequence belongs to the adenylate kinase family. As to quaternary structure, monomer.

The protein localises to the cytoplasm. It carries out the reaction AMP + ATP = 2 ADP. It functions in the pathway purine metabolism; AMP biosynthesis via salvage pathway; AMP from ADP: step 1/1. Its function is as follows. Catalyzes the reversible transfer of the terminal phosphate group between ATP and AMP. Plays an important role in cellular energy homeostasis and in adenine nucleotide metabolism. The sequence is that of Adenylate kinase from Rhizobium rhizogenes (strain K84 / ATCC BAA-868) (Agrobacterium radiobacter).